Here is a 1007-residue protein sequence, read N- to C-terminus: RNA-binding protein 26 (1007 aa).

Lysine 94 participates in a covalent cross-link: Glycyl lysine isopeptide (Lys-Gly) (interchain with G-Cter in SUMO2). Lysine 106 is covalently cross-linked (Glycyl lysine isopeptide (Lys-Gly) (interchain with G-Cter in SUMO1); alternate). Residue lysine 106 forms a Glycyl lysine isopeptide (Lys-Gly) (interchain with G-Cter in SUMO2); alternate linkage. The span at lysine 106 to lysine 118 shows a compositional bias: basic and acidic residues. Residues lysine 106–isoleucine 241 form a disordered region. Serine 127 bears the Phosphoserine mark. The segment covering arginine 134–arginine 168 has biased composition (basic and acidic residues). Over residues tyrosine 169–serine 186 the composition is skewed to basic residues. Basic and acidic residues-rich tracts occupy residues tryptophan 187–arginine 201 and arginine 209–proline 227. The segment covering leucine 228–isoleucine 241 has biased composition (polar residues). The C3H1-type zinc-finger motif lies at proline 288–aspartate 316. Positions glutamine 334–glutamine 388 are enriched in pro residues. Disordered stretches follow at residues glutamine 334–proline 404 and isoleucine 460–proline 519. A compositionally biased stretch (low complexity) spans alanine 394 to proline 404. The residue at position 496 (serine 496) is a Phosphoserine. Position 510 is an N6-acetyllysine (lysine 510). Phosphoserine is present on serine 518. The RRM 1 domain occupies threonine 532–glutamate 606. Position 616 is a phosphoserine (serine 616). Coiled-coil stretches lie at residues aspartate 719 to serine 795 and lysine 823 to lysine 847. The segment at serine 853–alanine 884 is disordered. Basic residues predominate over residues arginine 857–glycine 877. The 70-residue stretch at arginine 891–proline 960 folds into the RRM 2 domain. The disordered stretch occupies residues alanine 966–arginine 1007. Positions glutamate 968 to asparagine 1000 are enriched in acidic residues.

May be involved in the turnover of nuclear polyadenylated (pA+) RNA. In Homo sapiens (Human), this protein is RNA-binding protein 26.